A 494-amino-acid polypeptide reads, in one-letter code: tRNA-2-methylthio-N(6)-dimethylallyladenosine synthase (494 aa).

An MTTase N-terminal domain is found at 4-120 (RSYQVRTFGC…LPVLLERARH (117 aa)). [4Fe-4S] cluster-binding residues include cysteine 13, cysteine 49, cysteine 83, cysteine 157, cysteine 161, and cysteine 164. A Radical SAM core domain is found at 143-374 (RASHHSAWVS…SLQDEMSWAE (232 aa)). The TRAM domain occupies 376–449 (RAQVGRRVEI…PHHLTADGPL (74 aa)). The interval 465–494 (RAIAGDTPRPDRPAVSLGMPQLRPSAPAAR) is disordered.

Belongs to the methylthiotransferase family. MiaB subfamily. As to quaternary structure, monomer. The cofactor is [4Fe-4S] cluster.

The protein localises to the cytoplasm. The enzyme catalyses N(6)-dimethylallyladenosine(37) in tRNA + (sulfur carrier)-SH + AH2 + 2 S-adenosyl-L-methionine = 2-methylsulfanyl-N(6)-dimethylallyladenosine(37) in tRNA + (sulfur carrier)-H + 5'-deoxyadenosine + L-methionine + A + S-adenosyl-L-homocysteine + 2 H(+). Its function is as follows. Catalyzes the methylthiolation of N6-(dimethylallyl)adenosine (i(6)A), leading to the formation of 2-methylthio-N6-(dimethylallyl)adenosine (ms(2)i(6)A) at position 37 in tRNAs that read codons beginning with uridine. The polypeptide is tRNA-2-methylthio-N(6)-dimethylallyladenosine synthase (Parafrankia sp. (strain EAN1pec)).